Consider the following 952-residue polypeptide: MSVPNSSNKQTCFTARHIGPNSEDVATMLAVIGVESLDDLAAKAVPSDILDNVTDTGVAPGLDRLPPPATESETLAELGALARANTVAVSMIGQGYYDTLTPAVLSRNILENPAWYTPYTPYQPEISQGRLEALLNFQTLVSDLTGLEIANASMLDEGTAAAEAMTLMYRAARSTASRVVVDVDVFAQTVAVFATRAKPLGIDIVVADLREGLPDGEFFGVITQLPGASGRITDWTALIAQAHSRGALVAVGADLLALTLITPPGEIGADVAFGTTQRFGVPMGFGGPHAGYLALHTKHARQLPGRLVGVSVDSDGTPAYRLALQTREQHIRRDKATSNICTAQVLLAVMAAMYASYHGAEGLTGIARRVHAQARALAAGLSAAGVEVVHQAFFDTVLARVPGRTVQIQGAAKERGINVWLVDGDHVSVACDEATTDEHITAVLAAFAATPARASFAGPDIATRTSAFLTHPTFTKYRTETSMMRYLRALADKDIALDRSMIPLGSCTMKLNAAAEMESITWQEFTRQHPFAPVSDTPGLRRLISDLESWLVQITGYDAVSLQPNAGSQGEYAGLLAIHDYHVSRGEPHRNVCLIPSSAHGTNAASAALVGMRVVVVGCHDNGDVDLDDLRIKLSEHANRLSVLMITYPSTHGVYEHDIAEICAAVHDAGGQVYVDGANLNALVGLARPGKFGGDVSHLNLHKTFCIPHGGGGPGVGPVAVRSHLVSFLPGHPFAPELPQGQPVSSAPYGSASLLPITWAYIRMMGADGLRTASLTAIASANYIARRLDKYFPVLYTGENGMVAHECILDLRPITKSVGVTVDDVAKRLADYGFHAPTMSFPVPGTLMVEPTESESLAEIDAFCEAMIAIRGEIARVGAGEWSVEDNPLRGAPHTAECLLASDWDHPYTREEAAYPLGKAFRPKVWPPVRRIDGVYGDRNLVCSCLPVEAFV.

The residue at position 703 (lysine 703) is an N6-(pyridoxal phosphate)lysine.

This sequence belongs to the GcvP family. As to quaternary structure, the glycine cleavage system is composed of four proteins: P, T, L and H. Pyridoxal 5'-phosphate is required as a cofactor.

It carries out the reaction N(6)-[(R)-lipoyl]-L-lysyl-[glycine-cleavage complex H protein] + glycine + H(+) = N(6)-[(R)-S(8)-aminomethyldihydrolipoyl]-L-lysyl-[glycine-cleavage complex H protein] + CO2. Its function is as follows. The glycine cleavage system catalyzes the degradation of glycine. The P protein binds the alpha-amino group of glycine through its pyridoxal phosphate cofactor; CO(2) is released and the remaining methylamine moiety is then transferred to the lipoamide cofactor of the H protein. In Mycobacterium leprae (strain Br4923), this protein is Glycine dehydrogenase (decarboxylating).